Reading from the N-terminus, the 130-residue chain is Small ribosomal subunit protein uS11 (130 aa).

It belongs to the universal ribosomal protein uS11 family. Part of the 30S ribosomal subunit. Interacts with proteins S7 and S18. Binds to IF-3.

Located on the platform of the 30S subunit, it bridges several disparate RNA helices of the 16S rRNA. Forms part of the Shine-Dalgarno cleft in the 70S ribosome. This chain is Small ribosomal subunit protein uS11, found in Synechococcus sp. (strain WH7803).